The primary structure comprises 362 residues: MAIEPRAGILDIRPYKPGSSEAPGIENPVKLSSNENALGCSDKAAAAMTATASKLHLYPDGGATKLREAIAEAEGLEAENIVCGTGSDELLQLLGRAYLNPGDKVVQSQYGFLVYRLVAMQCGANLVSAPERDYRSDVDAILEAAGDDTRIVFLANPNNPTGTYISAAEVRRLRDGLPASTLLVLDAAYAEFVDNPDYEAGIELARERDDVIVTRTFSKIHGLAALRLGWAYGNKAIIDVLHRVRGPFNVNMAAIEAGTAAIQDRDFMKRSVEHNEEWVAFLRQQIGGLGLEVTPSVCNFVLIHFPETPGKTAADADAYLTSQGLIIRAVDPYGLPNALRATVGSETENRRLVDALSTFMKA.

Position 219 is an N6-(pyridoxal phosphate)lysine (lysine 219).

This sequence belongs to the class-II pyridoxal-phosphate-dependent aminotransferase family. Histidinol-phosphate aminotransferase subfamily. As to quaternary structure, homodimer. Requires pyridoxal 5'-phosphate as cofactor.

The catalysed reaction is L-histidinol phosphate + 2-oxoglutarate = 3-(imidazol-4-yl)-2-oxopropyl phosphate + L-glutamate. It participates in amino-acid biosynthesis; L-histidine biosynthesis; L-histidine from 5-phospho-alpha-D-ribose 1-diphosphate: step 7/9. This Maricaulis maris (strain MCS10) (Caulobacter maris) protein is Histidinol-phosphate aminotransferase.